The chain runs to 255 residues: Putative cysteine-rich repeat secretory protein 13 (255 aa).

The N-terminal stretch at 1–21 (MSSNILAMVAMQLLLIRIVSS) is a signal peptide. 2 Gnk2-homologous domains span residues 28–136 (YLNH…SVNT) and 142–252 (YDSF…LYPF).

Belongs to the cysteine-rich repeat secretory protein family.

It localises to the secreted. In Arabidopsis thaliana (Mouse-ear cress), this protein is Putative cysteine-rich repeat secretory protein 13 (CRRSP13).